Here is a 354-residue protein sequence, read N- to C-terminus: Tribbles homolog 3 (354 aa).

The segment at 1–127 is interaction with DDIT3/CHOP; the sequence is MRATPLAASA…QHVARPTEVL (127 aa). The tract at residues 36–61 is disordered; the sequence is RDEPEPGPLPSLLPPSPPPASDLSPA. Positions 41-55 are enriched in pro residues; it reads PGPLPSLLPPSPPPA. The region spanning 68 to 315 is the Protein kinase domain; sequence LGPYILLERE…ALGILLHPWL (248 aa). Residues 320-333 are compositionally biased toward basic and acidic residues; the sequence is GRVSPPQSDRREMD. A disordered region spans residues 320–354; sequence GRVSPPQSDRREMDQVVPDGPQLEEAEEGEVGLYG. Positions 341–354 are enriched in acidic residues; the sequence is QLEEAEEGEVGLYG.

It belongs to the protein kinase superfamily. CAMK Ser/Thr protein kinase family. Tribbles subfamily. As to quaternary structure, interacts with AKT1, AKT2, MAP2K1 and MAP2K7. Interacts with ATF4. Interacts with DDIT3/CHOP and inhibits its interaction with EP300/P300. Interacts with APOBEC3C. Interacts (via N-terminus) with APOBEC3A. Interacts with RELA. As to expression, highly expressed in liver. Not detected in heart, brain, spleen, lung, skeletal muscle, kidney or testis.

The protein resides in the nucleus. Functionally, inactive protein kinase which acts as a regulator of the integrated stress response (ISR), a process for adaptation to various stress. Inhibits the transcriptional activity of DDIT3/CHOP and is involved in DDIT3/CHOP-dependent cell death during ER stress. May play a role in programmed neuronal cell death but does not appear to affect non-neuronal cells. Acts as a negative feedback regulator of the ATF4-dependent transcription during the ISR: while TRIB3 expression is promoted by ATF4, TRIB3 protein interacts with ATF4 and inhibits ATF4 transcription activity. Disrupts insulin signaling by binding directly to Akt kinases and blocking their activation. May bind directly to and mask the 'Thr-308' phosphorylation site in AKT1. Interacts with the NF-kappa-B transactivator p65 RELA and inhibits its phosphorylation and thus its transcriptional activation activity. Interacts with MAPK kinases and regulates activation of MAP kinases. Can inhibit APOBEC3A editing of nuclear DNA. This chain is Tribbles homolog 3 (Trib3), found in Mus musculus (Mouse).